Here is a 335-residue protein sequence, read N- to C-terminus: Calcium-binding protein TgpCaBP (335 aa).

The chain crosses the membrane as a helical span at residues 30-50; it reads LPLCVFSLFLFSFAFSALSGA. EF-hand domains follow at residues 113–148, 153–188, 190–225, and 227–262; these read MHQH…SLDQ, QHKK…GKDE, LMKI…GSLN, and VEKT…PHSH. D126, D128, D130, K132, E137, D166, D168, D170, E177, D203, N205, D207, K209, E214, D240, N242, D244, and E251 together coordinate Ca(2+). A Prevents secretion from ER motif is present at residues 332-335; that stretch reads HDEL.

Its subcellular location is the endoplasmic reticulum membrane. It is found in the cytoplasm. The protein resides in the cytosol. Functionally, calcium-binding protein. Participates in the efflux of intracellular Ca(2+) and storage of Ca(2+) in the endoplasmic reticulum. Required for gliding, host cell invasion and egress. Required for microneme secretion. The sequence is that of Calcium-binding protein TgpCaBP from Toxoplasma gondii.